We begin with the raw amino-acid sequence, 366 residues long: RNA 3'-terminal phosphate cyclase (366 aa).

Residues Gln104, Pro131, Tyr294, Asp297, Gln298, and His320 each coordinate ATP. Catalysis depends on His320, which acts as the Tele-AMP-histidine intermediate.

This sequence belongs to the RNA 3'-terminal cyclase family. Type 1 subfamily.

It is found in the nucleus. The protein resides in the nucleoplasm. It catalyses the reaction a 3'-end 3'-phospho-ribonucleotide-RNA + ATP = a 3'-end 2',3'-cyclophospho-ribonucleotide-RNA + AMP + diphosphate. Functionally, catalyzes the conversion of 3'-phosphate to a 2',3'-cyclic phosphodiester at the end of RNA. The mechanism of action of the enzyme occurs in 3 steps: (A) adenylation of the enzyme by ATP; (B) transfer of adenylate to an RNA-N3'P to produce RNA-N3'PP5'A; (C) and attack of the adjacent 2'-hydroxyl on the 3'-phosphorus in the diester linkage to produce the cyclic end product. Likely functions in some aspects of cellular RNA processing. Function plays an important role in regulating axon regeneration by inhibiting central nervous system (CNS) axon regeneration following optic nerve injury. This is RNA 3'-terminal phosphate cyclase (RTCA) from Macaca fascicularis (Crab-eating macaque).